Here is a 251-residue protein sequence, read N- to C-terminus: Hydroxyacylglutathione hydrolase (251 aa).

Residues histidine 55, histidine 57, aspartate 59, histidine 60, histidine 112, aspartate 131, and histidine 169 each coordinate Zn(2+).

It belongs to the metallo-beta-lactamase superfamily. Glyoxalase II family. In terms of assembly, monomer. Zn(2+) is required as a cofactor.

It catalyses the reaction an S-(2-hydroxyacyl)glutathione + H2O = a 2-hydroxy carboxylate + glutathione + H(+). The protein operates within secondary metabolite metabolism; methylglyoxal degradation; (R)-lactate from methylglyoxal: step 2/2. In terms of biological role, thiolesterase that catalyzes the hydrolysis of S-D-lactoyl-glutathione to form glutathione and D-lactic acid. The chain is Hydroxyacylglutathione hydrolase from Erythrobacter litoralis (strain HTCC2594).